Consider the following 696-residue polypeptide: Probable transporter efuK (696 aa).

Residues 603-642 (SLNGGKMQGASDAKSKVEQGQRAMRKQDEQNGSKWEPVFF) are disordered. Over residues 615–633 (AKSKVEQGQRAMRKQDEQN) the composition is skewed to basic and acidic residues.

It belongs to the OSBP family.

In terms of biological role, probable transporter; part of the gene cluster that mediates the biosynthesis of enfumafungin, a glycosylated fernene-type triterpenoid with potent antifungal activity, mediated by its interaction with beta-1,3-glucan synthase and the fungal cell wall. Might be involved in transport of enfumafungin to and across organelle membranes. The protein is Probable transporter efuK of Hormonema carpetanum.